We begin with the raw amino-acid sequence, 402 residues long: NADH-quinone oxidoreductase subunit D (402 aa).

Belongs to the complex I 49 kDa subunit family. In terms of assembly, NDH-1 is composed of 14 different subunits. Subunits NuoB, C, D, E, F, and G constitute the peripheral sector of the complex.

It localises to the cell inner membrane. It carries out the reaction a quinone + NADH + 5 H(+)(in) = a quinol + NAD(+) + 4 H(+)(out). Functionally, NDH-1 shuttles electrons from NADH, via FMN and iron-sulfur (Fe-S) centers, to quinones in the respiratory chain. The immediate electron acceptor for the enzyme in this species is believed to be ubiquinone. Couples the redox reaction to proton translocation (for every two electrons transferred, four hydrogen ions are translocated across the cytoplasmic membrane), and thus conserves the redox energy in a proton gradient. In Xanthobacter autotrophicus (strain ATCC BAA-1158 / Py2), this protein is NADH-quinone oxidoreductase subunit D.